The following is a 365-amino-acid chain: Galactoside alpha-(1,2)-fucosyltransferase 1 (365 aa).

Over 1 to 8 (MWPLSHRH) the chain is Cytoplasmic. Residues 9 to 25 (LCLAFLLVCVLSAISFF) form a helical; Signal-anchor for type II membrane protein membrane-spanning segment. The Lumenal portion of the chain corresponds to 26-365 (LHIYQDSIRH…LSPLWTLAEP (340 aa)). Residues N65, N301, and N327 are each glycosylated (N-linked (GlcNAc...) asparagine).

It belongs to the glycosyltransferase 11 family.

It is found in the golgi apparatus. The protein resides in the golgi stack membrane. It carries out the reaction a beta-D-galactosyl-(1-&gt;4)-N-acetyl-beta-D-glucosaminyl derivative + GDP-beta-L-fucose = an alpha-L-Fuc-(1-&gt;2)-beta-D-Gal-(1-&gt;4)-beta-D-GlcNAc derivative + GDP + H(+). The catalysed reaction is a ganglioside GA1 + GDP-beta-L-fucose = a ganglioside Fuc-GA1 + GDP + H(+). The enzyme catalyses a beta-D-Gal-(1-&gt;3)-beta-D-GlcNAc-(1-&gt;3)-beta-D-Gal-(1-&gt;4)-beta-D-Glc-(1&lt;-&gt;1')-Cer(d18:1(4E)) + GDP-beta-L-fucose = alpha-L-fucosyl-(1-&gt;2)- beta-D-galactosyl-(1-&gt;3)-N-acetyl-beta-D-glucosaminyl-(1-&gt;3)-beta-D-galactosyl-(1-&gt;4)-beta-D-glucosyl-(1&lt;-&gt;1')-N-acylsphing-4-enine + GDP + H(+). It catalyses the reaction a neolactoside nLc4Cer(d18:1(4E)) + GDP-beta-L-fucose = a neolactoside IV(2)-alpha-Fuc-nLc4Cer(d18:1(4E)) + GDP + H(+). It carries out the reaction a ganglioside GM1 + GDP-beta-L-fucose = a ganglioside Fuc-GM1 + GDP + H(+). The catalysed reaction is beta-D-galactosyl-(1-&gt;3)-N-acetyl-D-galactosamine + GDP-beta-L-fucose = alpha-L-fucosyl-(1-&gt;2)-beta-D-galactosyl-(1-&gt;3)-N-acetyl-D-galactosamine + GDP + H(+). Its pathway is protein modification; protein glycosylation. Catalyzes the transfer of L-fucose, from a guanosine diphosphate-beta-L-fucose, to the terminal galactose residue of glycoconjugates through an alpha(1,2) linkage leading to H antigen synthesis that is an intermediate substrate in the synthesis of ABO blood group antigens. H antigen is essential for maturation of the glomerular layer of the main olfactory bulb, in cell migration and early cell-cell contacts during tumor associated angiogenesis. Preferentially fucosylates soluble lactose and to a lesser extent fucosylates glycolipids gangliosides GA1 and GM1a. The polypeptide is Galactoside alpha-(1,2)-fucosyltransferase 1 (Mico humeralifer (Black and white tassel-ear marmoset)).